Reading from the N-terminus, the 211-residue chain is 1-deoxy-D-xylulose 5-phosphate reductoisomerase (211 aa).

Residue aspartate 14 participates in Mn(2+) binding. Residues serine 15, glutamate 16, serine 40, histidine 63, serine 76, asparagine 81, lysine 82, and glutamate 85 each contribute to the 1-deoxy-D-xylulose 5-phosphate site. Glutamate 16 is a Mn(2+) binding site. Glutamate 85 is a binding site for Mn(2+).

Belongs to the DXR family. It depends on Mn(2+) as a cofactor. Requires Mg(2+) as cofactor. In terms of tissue distribution, mostly expressed in flowers and, to a lower extent, in leaves.

It is found in the plastid. It localises to the chloroplast stroma. The catalysed reaction is 2-C-methyl-D-erythritol 4-phosphate + NADP(+) = 1-deoxy-D-xylulose 5-phosphate + NADPH + H(+). It functions in the pathway isoprenoid biosynthesis; isopentenyl diphosphate biosynthesis via DXP pathway; isopentenyl diphosphate from 1-deoxy-D-xylulose 5-phosphate: step 1/6. Enzyme of the plastid non-mevalonate pathway for isoprenoid biosynthesis that catalyzes the NADPH-dependent rearrangement and reduction of 1-deoxy-D-xylulose-5-phosphate (DXP) to 2-C-methyl-D-erythritol 4-phosphate (MEP). Required for chloroplast development. This is 1-deoxy-D-xylulose 5-phosphate reductoisomerase from Thymus vulgaris (Thyme).